We begin with the raw amino-acid sequence, 349 residues long: Replication-associated protein (349 aa).

The 109-residue stretch at Q9–F117 folds into the CRESS-DNA virus Rep endonuclease domain. The RCR-1 motif lies at F16–Y19. Residues E50, H58, and H60 each coordinate a divalent metal cation. Residues H58–H60 carry the RCR-2 motif. Y104 acts as the For DNA cleavage activity in catalysis. The RCR-3 signature appears at Y104–K107. D108 contributes to the a divalent metal cation binding site. The interval K144 to K154 is binding to RBR1. Positions K157–A177 are oligomerization. G223–T230 serves as a coordination point for ATP.

The protein belongs to the geminiviridae Rep protein family. In terms of assembly, homooligomer. Interacts with the replication enhancer protein (REn). Interacts with host retinoblastoma-related protein 1 (RBR1), and may thereby induce the transcription of host replicative enzymes even if the cell is not dividing anymore. Interacts with host PCNA. Interacts with host SCE1 protein. Requires Mg(2+) as cofactor. Mn(2+) is required as a cofactor.

It localises to the host nucleus. Its function is as follows. Essential for the replication of viral ssDNA. The closed circular ssDNA genome is first converted to a superhelical dsDNA. Rep binds a specific region at the genome origin of replication. It introduces an endonucleolytic nick within the conserved sequence 5'-TAATATTAC-3' in the intergenic region of the genome present in all geminiviruses, thereby initiating the rolling circle replication (RCR). Following cleavage, binds covalently to the 5'-phosphate of DNA as a tyrosyl ester. The cleavage gives rise to a free 3'-OH that serves as a primer for the cellular DNA polymerase. The polymerase synthesizes the (+) strand DNA by rolling circle mechanism. After one round of replication, a Rep-catalyzed nucleotidyl transfer reaction releases a circular single-stranded virus genome, thereby terminating the replication. Displays origin-specific DNA cleavage, nucleotidyl transferase, ATPase and helicase activities. The chain is Replication-associated protein from Solanum lycopersicum (Tomato).